We begin with the raw amino-acid sequence, 296 residues long: Acetylglutamate kinase (296 aa).

Substrate contacts are provided by residues 69–70 (GG), arginine 91, and asparagine 193.

It belongs to the acetylglutamate kinase family. ArgB subfamily.

The protein localises to the cytoplasm. The catalysed reaction is N-acetyl-L-glutamate + ATP = N-acetyl-L-glutamyl 5-phosphate + ADP. The protein operates within amino-acid biosynthesis; L-arginine biosynthesis; N(2)-acetyl-L-ornithine from L-glutamate: step 2/4. Its function is as follows. Catalyzes the ATP-dependent phosphorylation of N-acetyl-L-glutamate. This is Acetylglutamate kinase from Verminephrobacter eiseniae (strain EF01-2).